The chain runs to 79 residues: RNA-binding protein Hfq (79 aa).

The 60-residue stretch at 10–69 folds into the Sm domain; that stretch reads GPFLNALRKEHVPVSIYLVNGIKLQGNIESFDQYVVLLRNTVTQMVYKHAISTVVPARAV.

This sequence belongs to the Hfq family. As to quaternary structure, homohexamer.

RNA chaperone that binds small regulatory RNA (sRNAs) and mRNAs to facilitate mRNA translational regulation in response to envelope stress, environmental stress and changes in metabolite concentrations. Also binds with high specificity to tRNAs. This is RNA-binding protein Hfq from Cupriavidus necator (strain ATCC 17699 / DSM 428 / KCTC 22496 / NCIMB 10442 / H16 / Stanier 337) (Ralstonia eutropha).